The following is a 390-amino-acid chain: Putative RING-H2 finger protein ATL12 (390 aa).

A signal peptide spans 1 to 22 (MNSPQEISILFFFIIFLDYVSA). Residues 41 to 61 (LAIITGVFSIVFTLTFVLLVY) form a helical membrane-spanning segment. Residues 124-166 (CSVCLSKFEDVEILRLLPKCRHAFHIGCIDQWLEQHATCPLCR) form an RING-type; atypical zinc finger.

Belongs to the RING-type zinc finger family. ATL subfamily.

It is found in the membrane. The enzyme catalyses S-ubiquitinyl-[E2 ubiquitin-conjugating enzyme]-L-cysteine + [acceptor protein]-L-lysine = [E2 ubiquitin-conjugating enzyme]-L-cysteine + N(6)-ubiquitinyl-[acceptor protein]-L-lysine.. Its pathway is protein modification; protein ubiquitination. The polypeptide is Putative RING-H2 finger protein ATL12 (ATL12) (Arabidopsis thaliana (Mouse-ear cress)).